The following is a 332-amino-acid chain: Glyceraldehyde-3-phosphate dehydrogenase (332 aa).

NAD(+) is bound by residues 11–12, Asp-34, Arg-78, and Ser-120; that span reads RI. D-glyceraldehyde 3-phosphate-binding positions include 151–153, Thr-182, Arg-197, 210–211, and Arg-233; these read SCT and TG. Catalysis depends on Cys-152, which acts as the Nucleophile. An NAD(+)-binding site is contributed by Asn-314.

Belongs to the glyceraldehyde-3-phosphate dehydrogenase family. As to quaternary structure, homotetramer.

Its subcellular location is the cytoplasm. The enzyme catalyses D-glyceraldehyde 3-phosphate + phosphate + NAD(+) = (2R)-3-phospho-glyceroyl phosphate + NADH + H(+). The protein operates within carbohydrate degradation; glycolysis; pyruvate from D-glyceraldehyde 3-phosphate: step 1/5. Its function is as follows. Catalyzes the oxidative phosphorylation of glyceraldehyde 3-phosphate (G3P) to 1,3-bisphosphoglycerate (BPG) using the cofactor NAD. The first reaction step involves the formation of a hemiacetal intermediate between G3P and a cysteine residue, and this hemiacetal intermediate is then oxidized to a thioester, with concomitant reduction of NAD to NADH. The reduced NADH is then exchanged with the second NAD, and the thioester is attacked by a nucleophilic inorganic phosphate to produce BPG. The polypeptide is Glyceraldehyde-3-phosphate dehydrogenase (gap) (Kitasatospora aureofaciens (Streptomyces aureofaciens)).